The primary structure comprises 436 residues: S-locus-specific glycoprotein S6 (436 aa).

A signal peptide spans 1-31 (MKGVRKPYDNSYTLSFLLVFFVLILFCPAFS). One can recognise a Bulb-type lectin domain in the interval 34–156 (TLSSTESLRI…SNNDASEYLW (123 aa)). N46, N64, N114, N121, N245, N261, and N390 each carry an N-linked (GlcNAc...) asparagine glycan. Positions 351-431 (CSGDGFTRMK…HGQDLYVRLA (81 aa)) constitute a PAN domain. Disulfide bonds link C381/C406 and C389/C391.

Stigma.

In terms of biological role, involved in sporophytic self-incompatibility system (the inability of flowering plants to achieve self-fertilization). The polypeptide is S-locus-specific glycoprotein S6 (SLSG) (Brassica oleracea (Wild cabbage)).